The sequence spans 105 residues: UPF0145 protein CCNA_02462 (105 aa).

Belongs to the UPF0145 family.

The chain is UPF0145 protein CCNA_02462 from Caulobacter vibrioides (strain NA1000 / CB15N) (Caulobacter crescentus).